The following is a 33-amino-acid chain: Photosystem II reaction center protein Psb30 (33 aa).

The chain crosses the membrane as a helical span at residues 5 to 25 (VVAQLTVLALIVVSGPLVIGL).

It belongs to the Psb30/Ycf12 family. PSII is composed of 1 copy each of membrane proteins PsbA, PsbB, PsbC, PsbD, PsbE, PsbF, PsbH, PsbI, PsbJ, PsbK, PsbL, PsbM, PsbT, PsbX, PsbY, PsbZ, Psb30/Ycf12, peripheral proteins of the oxygen-evolving complex and a large number of cofactors. It forms dimeric complexes.

It is found in the plastid. The protein localises to the chloroplast thylakoid membrane. A core subunit of photosystem II (PSII), probably helps stabilize the reaction center. The polypeptide is Photosystem II reaction center protein Psb30 (Zygnema circumcarinatum (Green alga)).